The chain runs to 61 residues: Small ribosomal subunit protein uS14 (61 aa).

The Zn(2+) site is built by cysteine 24, cysteine 27, cysteine 40, and cysteine 43.

Belongs to the universal ribosomal protein uS14 family. Zinc-binding uS14 subfamily. Part of the 30S ribosomal subunit. Contacts proteins S3 and S10. Zn(2+) serves as cofactor.

In terms of biological role, binds 16S rRNA, required for the assembly of 30S particles and may also be responsible for determining the conformation of the 16S rRNA at the A site. The sequence is that of Small ribosomal subunit protein uS14 from Maridesulfovibrio salexigens (strain ATCC 14822 / DSM 2638 / NCIMB 8403 / VKM B-1763) (Desulfovibrio salexigens).